We begin with the raw amino-acid sequence, 230 residues long: Type II restriction enzyme NlaIII (230 aa).

The enzyme catalyses Endonucleolytic cleavage of DNA to give specific double-stranded fragments with terminal 5'-phosphates.. A P subtype restriction enzyme that recognizes the double-stranded sequence 5'-CATG-3' and cleaves after G-4. The sequence is that of Type II restriction enzyme NlaIII (nlaIIIR) from Neisseria lactamica.